Consider the following 525-residue polypeptide: uncharacterized protein (525 aa).

S55 carries the phosphoserine modification. The next 13 helical transmembrane spans lie at 81 to 101 (AYIV…PNFY), 120 to 140 (LLGQ…LGPL), 147 to 167 (KLVY…CALA), 173 to 193 (LVIS…NVAG), 208 to 228 (MYMF…GTGV), 238 to 258 (WLYW…VFTP), 295 to 315 (FVFF…SLGI), 318 to 338 (GFVN…YFSI), 350 to 370 (YMAA…QCWL), 388 to 408 (FIMT…FAFC), 413 to 433 (IHYI…YHIW), 454 to 474 (AFEL…ALMF), and 484 to 504 (AVVG…YFYG).

This sequence belongs to the major facilitator superfamily. CAR1 family.

It localises to the membrane. This is an uncharacterized protein from Schizosaccharomyces pombe (strain 972 / ATCC 24843) (Fission yeast).